The chain runs to 335 residues: Putative T-box protein 7 (335 aa).

Positions 73–246 (LWSTFLECGT…NNPFAKGFRN (174 aa)) form a DNA-binding region, T-box.

It localises to the nucleus. This chain is Putative T-box protein 7, found in Caenorhabditis elegans.